A 520-amino-acid chain; its full sequence is Ribonuclease Y (520 aa).

A helical membrane pass occupies residues Thr-4–Val-24. Positions Thr-210–Leu-273 constitute a KH domain. The 94-residue stretch at Val-336–Ala-429 folds into the HD domain.

This sequence belongs to the RNase Y family.

It is found in the cell membrane. Functionally, endoribonuclease that initiates mRNA decay. This chain is Ribonuclease Y, found in Bacillus pumilus (strain SAFR-032).